A 378-amino-acid chain; its full sequence is Squalene methyltransferase 2 (378 aa).

The chain crosses the membrane as a helical span at residues Leu-17–Ile-37.

It belongs to the class I-like SAM-binding methyltransferase superfamily. Erg6/SMT family.

The protein resides in the microsome membrane. The catalysed reaction is squalene + 2 S-adenosyl-L-methionine = 3,22-dimethyl-1,2,23,24-tetradehydro-2,3,22,23-tetrahydrosqualene + 2 S-adenosyl-L-homocysteine + 2 H(+). Its function is as follows. Converts squalene to mono- and dimethyl derivatives, but not to tri- and tetramethylated products. Unable to methylate cycloartenol, zymosterol or lanosterol. Methylates both C-3 and C22 positions, but only C-3 position in monomethylated products. Produces mainly monomethylated squalene and only 20% of dimethylated squalene. In Botryococcus braunii (Green alga), this protein is Squalene methyltransferase 2 (TMT-2).